A 1038-amino-acid chain; its full sequence is Probable LRR receptor-like serine/threonine-protein kinase At1g53430 (1038 aa).

Residues 1 to 28 (MGFIFSTEKVVYVLLLIFVCLENFGSNA) form the signal peptide. At 29–609 (QLLPEDEVQT…VDTGKPLSNG (581 aa)) the chain is on the extracellular side. Residues Asn48, Asn77, Asn85, Asn112, and Asn127 are each glycosylated (N-linked (GlcNAc...) asparagine). LRR repeat units lie at residues 113-137 (LTRL…LSQI), 139-160 (LEIL…LGDI), 161-184 (TTLT…LGNL), 185-208 (RSLK…LSNL), 210-234 (NLTE…NWTL), and 236-256 (ERLD…ISNL). N-linked (GlcNAc...) asparagine glycans are attached at residues Asn196, Asn210, Asn231, Asn255, and Asn258. LRR repeat units lie at residues 259-281 (LTEL…LRNL), 282-305 (MKMK…IGSM), 306-328 (SELK…TFRN), 330-351 (DAFN…QFII), and 352-374 (NSKE…SCNQ). 4 N-linked (GlcNAc...) asparagine glycosylation sites follow: Asn339, Asn363, Asn471, and Asn561. The helical transmembrane segment at 610 to 630 (AVAGIVIAACAVFGLLVLVIL) threads the bilayer. The Cytoplasmic portion of the chain corresponds to 631–1038 (RLTGYLGGKE…LDDLTDVKIE (408 aa)). Thr658 is modified (phosphothreonine). In terms of domain architecture, Protein kinase spans 669-950 (FDPENKIGEG…EGKIKVQPPL (282 aa)). ATP contacts are provided by residues 675 to 683 (IGEGGFGPV) and Lys697. Tyr742 is modified (phosphotyrosine). The Proton acceptor role is filled by Asp795. Ser828 carries the post-translational modification Phosphoserine. Residues Thr829 and Thr834 each carry the phosphothreonine modification. At Tyr842 the chain carries Phosphotyrosine. The disordered stretch occupies residues 984–1038 (RNREQDISSSSMDGPWVDSSFSEPGKDVSLQQQEEGRSSSSSRKLLDDLTDVKIE). Positions 1027-1038 (KLLDDLTDVKIE) are enriched in basic and acidic residues.

It belongs to the protein kinase superfamily. Ser/Thr protein kinase family.

The protein localises to the membrane. It carries out the reaction L-seryl-[protein] + ATP = O-phospho-L-seryl-[protein] + ADP + H(+). It catalyses the reaction L-threonyl-[protein] + ATP = O-phospho-L-threonyl-[protein] + ADP + H(+). The polypeptide is Probable LRR receptor-like serine/threonine-protein kinase At1g53430 (Arabidopsis thaliana (Mouse-ear cress)).